Consider the following 336-residue polypeptide: Holliday junction branch migration complex subunit RuvB (336 aa).

A large ATPase domain (RuvB-L) region spans residues 4-184 (ADRLISAGTT…FGIVQRLEFY (181 aa)). ATP-binding positions include isoleucine 23, arginine 24, glycine 65, lysine 68, threonine 69, threonine 70, 131 to 133 (EDY), arginine 174, tyrosine 184, and arginine 221. Threonine 69 serves as a coordination point for Mg(2+). Residues 185–255 (QVPDLQYIVS…IAAQALDMLN (71 aa)) form a small ATPAse domain (RuvB-S) region. Residues 258–336 (AEGFDYMDRK…HFGITPPEMP (79 aa)) form a head domain (RuvB-H) region. The DNA site is built by arginine 294, arginine 313, and arginine 318.

It belongs to the RuvB family. In terms of assembly, homohexamer. Forms an RuvA(8)-RuvB(12)-Holliday junction (HJ) complex. HJ DNA is sandwiched between 2 RuvA tetramers; dsDNA enters through RuvA and exits via RuvB. An RuvB hexamer assembles on each DNA strand where it exits the tetramer. Each RuvB hexamer is contacted by two RuvA subunits (via domain III) on 2 adjacent RuvB subunits; this complex drives branch migration. In the full resolvosome a probable DNA-RuvA(4)-RuvB(12)-RuvC(2) complex forms which resolves the HJ.

It is found in the cytoplasm. The catalysed reaction is ATP + H2O = ADP + phosphate + H(+). The RuvA-RuvB-RuvC complex processes Holliday junction (HJ) DNA during genetic recombination and DNA repair, while the RuvA-RuvB complex plays an important role in the rescue of blocked DNA replication forks via replication fork reversal (RFR). RuvA specifically binds to HJ cruciform DNA, conferring on it an open structure. The RuvB hexamer acts as an ATP-dependent pump, pulling dsDNA into and through the RuvAB complex. RuvB forms 2 homohexamers on either side of HJ DNA bound by 1 or 2 RuvA tetramers; 4 subunits per hexamer contact DNA at a time. Coordinated motions by a converter formed by DNA-disengaged RuvB subunits stimulates ATP hydrolysis and nucleotide exchange. Immobilization of the converter enables RuvB to convert the ATP-contained energy into a lever motion, pulling 2 nucleotides of DNA out of the RuvA tetramer per ATP hydrolyzed, thus driving DNA branch migration. The RuvB motors rotate together with the DNA substrate, which together with the progressing nucleotide cycle form the mechanistic basis for DNA recombination by continuous HJ branch migration. Branch migration allows RuvC to scan DNA until it finds its consensus sequence, where it cleaves and resolves cruciform DNA. The polypeptide is Holliday junction branch migration complex subunit RuvB (Escherichia coli (strain ATCC 8739 / DSM 1576 / NBRC 3972 / NCIMB 8545 / WDCM 00012 / Crooks)).